The primary structure comprises 306 residues: Pyridoxal 5'-phosphate synthase subunit PdxS (306 aa).

Residue Asp36 participates in D-ribose 5-phosphate binding. Lys93 functions as the Schiff-base intermediate with D-ribose 5-phosphate in the catalytic mechanism. Gly165 contacts D-ribose 5-phosphate. Arg177 contacts D-glyceraldehyde 3-phosphate. Residues Gly226 and 247–248 (GS) contribute to the D-ribose 5-phosphate site.

Belongs to the PdxS/SNZ family. In the presence of PdxT, forms a dodecamer of heterodimers.

The enzyme catalyses aldehydo-D-ribose 5-phosphate + D-glyceraldehyde 3-phosphate + L-glutamine = pyridoxal 5'-phosphate + L-glutamate + phosphate + 3 H2O + H(+). The protein operates within cofactor biosynthesis; pyridoxal 5'-phosphate biosynthesis. Functionally, catalyzes the formation of pyridoxal 5'-phosphate from ribose 5-phosphate (RBP), glyceraldehyde 3-phosphate (G3P) and ammonia. The ammonia is provided by the PdxT subunit. Can also use ribulose 5-phosphate and dihydroxyacetone phosphate as substrates, resulting from enzyme-catalyzed isomerization of RBP and G3P, respectively. The chain is Pyridoxal 5'-phosphate synthase subunit PdxS from Salinispora tropica (strain ATCC BAA-916 / DSM 44818 / JCM 13857 / NBRC 105044 / CNB-440).